Consider the following 204-residue polypeptide: dITP/XTP pyrophosphatase (204 aa).

A substrate-binding site is contributed by Thr14–Lys19. 2 residues coordinate Mg(2+): Glu46 and Asp75. Asp75 serves as the catalytic Proton acceptor. Substrate contacts are provided by residues Ser76, Phe161–Asp164, Lys184, and His189–Arg190.

Belongs to the HAM1 NTPase family. As to quaternary structure, homodimer. It depends on Mg(2+) as a cofactor.

The catalysed reaction is XTP + H2O = XMP + diphosphate + H(+). It carries out the reaction dITP + H2O = dIMP + diphosphate + H(+). The enzyme catalyses ITP + H2O = IMP + diphosphate + H(+). In terms of biological role, pyrophosphatase that catalyzes the hydrolysis of nucleoside triphosphates to their monophosphate derivatives, with a high preference for the non-canonical purine nucleotides XTP (xanthosine triphosphate), dITP (deoxyinosine triphosphate) and ITP. Seems to function as a house-cleaning enzyme that removes non-canonical purine nucleotides from the nucleotide pool, thus preventing their incorporation into DNA/RNA and avoiding chromosomal lesions. This Ruegeria pomeroyi (strain ATCC 700808 / DSM 15171 / DSS-3) (Silicibacter pomeroyi) protein is dITP/XTP pyrophosphatase.